A 140-amino-acid polypeptide reads, in one-letter code: Organic hydroperoxide resistance protein-like (140 aa).

This sequence belongs to the OsmC/Ohr family.

The protein is Organic hydroperoxide resistance protein-like of Mycoplasma pneumoniae (strain ATCC 29342 / M129 / Subtype 1) (Mycoplasmoides pneumoniae).